A 309-amino-acid polypeptide reads, in one-letter code: Olfactory receptor 4A47 (309 aa).

The Extracellular portion of the chain corresponds to 1-23; that stretch reads MEPRKNVTDFVLLGFTQNPKEQK. Asn-6 is a glycosylation site (N-linked (GlcNAc...) asparagine). The chain crosses the membrane as a helical span at residues 24 to 47; the sequence is VLFVMFLLFYILTMVGNLLIVVTV. Over 48-55 the chain is Cytoplasmic; it reads TVSETLGS. The helical transmembrane segment at 56–77 threads the bilayer; sequence PMYFFLAGLSFIDIIYSSSISP. Over 78 to 98 the chain is Extracellular; it reads RLISGLFFGNNSISFQSCMAQ. N-linked (GlcNAc...) asparagine glycosylation is present at Asn-87. An intrachain disulfide couples Cys-95 to Cys-187. A helical membrane pass occupies residues 99-118; it reads LFIEHIFGGSEVFLLLVMAY. Topologically, residues 119-137 are cytoplasmic; sequence DCYVAICKPLHYLVIMRQW. A helical membrane pass occupies residues 138–156; sequence VCVVLLVVSWVGGFLHSVF. At 157–193 the chain is on the extracellular side; sequence QLSIIYGLPFCGPNVIDHFFCDMYPLLKLVCTDTHAI. A helical transmembrane segment spans residues 194 to 217; sequence GLLVVANGGLACTIVFLLLLISYG. Residues 218–233 lie on the Cytoplasmic side of the membrane; it reads VILHSLKNLSQKGRQK. Residues 234–256 traverse the membrane as a helical segment; that stretch reads ALSTCSSHMTVVVFFFVPCIFMY. Topologically, residues 257–267 are extracellular; that stretch reads ARPARTFPIDK. Residues 268 to 287 traverse the membrane as a helical segment; the sequence is SVSVFYTVITPMLNPLIYTL. At 288-309 the chain is on the cytoplasmic side; that stretch reads RNSEMTSAMKKLWRRDLISSST.

Belongs to the G-protein coupled receptor 1 family.

The protein resides in the cell membrane. Odorant receptor. The chain is Olfactory receptor 4A47 (OR4A47) from Homo sapiens (Human).